The chain runs to 144 residues: Large ribosomal subunit protein uL13 (144 aa).

It belongs to the universal ribosomal protein uL13 family. As to quaternary structure, part of the 50S ribosomal subunit.

This protein is one of the early assembly proteins of the 50S ribosomal subunit, although it is not seen to bind rRNA by itself. It is important during the early stages of 50S assembly. In Blochmanniella pennsylvanica (strain BPEN), this protein is Large ribosomal subunit protein uL13.